The chain runs to 459 residues: Phosphoglucosamine mutase (459 aa).

Ser-106 functions as the Phosphoserine intermediate in the catalytic mechanism. 4 residues coordinate Mg(2+): Ser-106, Asp-247, Asp-249, and Asp-251. The residue at position 106 (Ser-106) is a Phosphoserine.

This sequence belongs to the phosphohexose mutase family. Mg(2+) serves as cofactor. In terms of processing, activated by phosphorylation.

It catalyses the reaction alpha-D-glucosamine 1-phosphate = D-glucosamine 6-phosphate. Catalyzes the conversion of glucosamine-6-phosphate to glucosamine-1-phosphate. The chain is Phosphoglucosamine mutase from Chlamydia muridarum (strain MoPn / Nigg).